A 129-amino-acid chain; its full sequence is Small ribosomal subunit protein uS11 (129 aa).

This sequence belongs to the universal ribosomal protein uS11 family. Part of the 30S ribosomal subunit. Interacts with proteins S7 and S18. Binds to IF-3.

Functionally, located on the platform of the 30S subunit, it bridges several disparate RNA helices of the 16S rRNA. Forms part of the Shine-Dalgarno cleft in the 70S ribosome. The sequence is that of Small ribosomal subunit protein uS11 from Novosphingobium aromaticivorans (strain ATCC 700278 / DSM 12444 / CCUG 56034 / CIP 105152 / NBRC 16084 / F199).